The sequence spans 367 residues: Dihydroxyacetone phosphate transaminase Cj1437c (367 aa).

N6-(pyridoxal phosphate)lysine is present on Lys219.

This sequence belongs to the class-II pyridoxal-phosphate-dependent aminotransferase family. It depends on pyridoxal 5'-phosphate as a cofactor.

The enzyme catalyses dihydroxyacetone phosphate + L-glutamate = (S)-serinol phosphate + 2-oxoglutarate. It functions in the pathway capsule biogenesis; capsule polysaccharide biosynthesis. In terms of biological role, pyridoxal phosphate (PLP)-dependent transaminase involved in the biosynthesis of amidated D-glucuronic acid structures found on the capsular polysaccharide (CPS) of C.jejuni. Catalyzes the transamination of dihydroxyacetone phosphate (DHAP) to (S)-serinol phosphate in the presence of L-glutamate. Less active with L-aspartate. No activity with dihydroxyacetone or L-alanine. The polypeptide is Dihydroxyacetone phosphate transaminase Cj1437c (Campylobacter jejuni subsp. jejuni serotype O:2 (strain ATCC 700819 / NCTC 11168)).